The chain runs to 1735 residues: Inactive tyrosine-protein kinase PEAK1 (1735 aa).

Disordered regions lie at residues 26 to 66 (LHQL…PPVA) and 111 to 145 (LSQKPLNNNSEGDAEGFGSDPQQCANNDSAQKISN). Polar residues-rich tracts occupy residues 111–121 (LSQKPLNNNSE) and 130–145 (DPQQCANNDSAQKISN). Residue serine 282 is modified to Phosphoserine. Disordered stretches follow at residues 324 to 410 (NSGV…SVKV), 491 to 514 (GRPKIKGSSSTPNSPVTSPALTPG), and 537 to 580 (SPRQ…SKTI). The span at 325–336 (SGVSYGQGSVQS) shows a compositional bias: low complexity. Positions 337 to 365 (TISSDCTSPGSSFTEESRSETASSLSQKV) are enriched in polar residues. The segment covering 367–378 (NGGISPGNPGNS) has biased composition (low complexity). Positions 384 to 393 (TESNFESPPG) are enriched in polar residues. The span at 498–509 (SSSTPNSPVTSP) shows a compositional bias: low complexity. Serine 537, serine 569, and serine 584 each carry phosphoserine. Residues 566–580 (APTSPTATNISSKTI) show a composition bias toward polar residues. Phosphotyrosine is present on residues tyrosine 632 and tyrosine 638. Position 645 is a phosphoserine (serine 645). Phosphotyrosine is present on tyrosine 662. Disordered regions lie at residues 663 to 762 (EEIE…REKA), 800 to 919 (PDAD…AADA), and 1019 to 1097 (RNSE…SATY). 3 stretches are compositionally biased toward polar residues: residues 704–735 (QEFNNCLNRGQSSPQRSYSSTHSSPAKIQRPT), 745–757 (AQGSQVPGSSSNS), and 819–839 (LFTSQSSGEGEAHQTTESPTA). 2 positions are modified to phosphoserine: serine 824 and serine 825. Positions 847 to 863 (TKPVTSPPSKLVTSAQS) are enriched in low complexity. Residues 864 to 873 (EPPPPFPPPR) are compositionally biased toward pro residues. The segment covering 879 to 901 (YHASNLLQRHFTNWTKPTSPTRS) has biased composition (polar residues). Serine 897 carries the phosphoserine modification. 2 stretches are compositionally biased toward basic and acidic residues: residues 902–919 (TEAESILHSEGSRRAADA) and 1037–1055 (ACSRVTHEVAGELSPRDPR). A compositionally biased stretch (acidic residues) spans 1076 to 1086 (EREEEKDDTLD). Residue threonine 1141 is modified to Phosphothreonine. Residue tyrosine 1177 is modified to Phosphotyrosine. The tract at residues 1274 to 1300 (EVVGKLRSLHTDALKRLAVKCEDLFMA) is required for homodimerization. The Protein kinase domain maps to 1302–1664 (QKDQLRFGVD…LLWGPREDLF (363 aa)). Phosphoserine is present on serine 1363. Positions 1394–1445 (WEDPDAPEKAEDGTEDSEEEGKAETLGGNPEPCSETEPSQKENQRVTNRKQR) are disordered. Positions 1659-1732 (PREDLFQIFT…DSLSYIVKIL (74 aa)) are required for homodimerization.

This sequence belongs to the protein kinase superfamily. As to quaternary structure, homodimer. Interacts with BCAR1 and CRK. Interacts with PRAG1. Interacts (when phosphorylated at Tyr-1177) with SHC1 (via PID domain). Found in a complex with PPP1CA, PPP1CC and SHC1. Interacts (when phosphorylated at Tyr-632) with tensin TNS3 (when phosphorylated on the SH2 domain); TNS3 also interacts with integrins ITGB1, ITGB3 and ITGB5 and mediates their association with PEAK1. In terms of processing, phosphorylated on tyrosine in a CSK-dependent manner in response to adhesion to fibronectin and to EGF stimulation. Phosphorylation at Tyr-662 by a Src family kinase controls subcellular localization to focal adhesion and focal adhesion dynamics. Phosphorylation at Tyr-1177 is essential for binding to SHC1. Phosphorylation at Tyr-632 promotes interaction with tensin TNS3.

It localises to the cytoplasm. It is found in the cytoskeleton. The protein localises to the cell junction. The protein resides in the focal adhesion. Functionally, probable catalytically inactive kinase. Scaffolding protein that regulates the cytoskeleton to control cell spreading and migration by modulating focal adhesion dynamics. Acts as a scaffold for mediating EGFR signaling. This is Inactive tyrosine-protein kinase PEAK1 (Peak1) from Mus musculus (Mouse).